A 298-amino-acid chain; its full sequence is Multifunctional dioxygenase ausE (298 aa).

Arg-72 and Gln-127 together coordinate substrate. Fe cation is bound by residues His-130 and Asp-132. Residue Thr-167 participates in substrate binding. His-214 is a binding site for Fe cation. Arg-226 contributes to the substrate binding site.

This sequence belongs to the PhyH family. As to quaternary structure, homodimer. Fe cation is required as a cofactor.

It carries out the reaction preaustinoid A1 + 2-oxoglutarate + O2 = preaustinoid A2 + succinate + CO2 + H2O. It catalyses the reaction preaustinoid A2 + 2-oxoglutarate + O2 = preaustinoid A3 + succinate + CO2 + H2O. The catalysed reaction is berkeleyone A + 2-oxoglutarate + O2 = preaustinoid A + succinate + CO2 + H2O. It functions in the pathway secondary metabolite biosynthesis; terpenoid biosynthesis. Multifunctional dioxygenase; part of the gene cluster B that mediates the biosynthesis of austinol and dehydroaustinol, two fungal meroterpenoids. The first step of the pathway is the synthesis of 3,5-dimethylorsellinic acid by the polyketide synthase ausA. 3,5-dimethylorsellinic acid is then prenylated by the polyprenyl transferase ausN. Further epoxidation by the FAD-dependent monooxygenase ausM and cyclization by the probable terpene cyclase ausL lead to the formation of protoaustinoid A. Protoaustinoid A is then oxidized to spiro-lactone preaustinoid A3 by the combined action of the FAD-binding monooxygenases ausB and ausC, and the dioxygenase ausE. Acid-catalyzed keto-rearrangement and ring contraction of the tetraketide portion of preaustinoid A3 by ausJ lead to the formation of preaustinoid A4. The aldo-keto reductase ausK, with the help of ausH, is involved in the next step by transforming preaustinoid A4 into isoaustinone which is in turn hydroxylated by the P450 monooxygenase ausI to form austinolide. Finally, the cytochrome P450 monooxygenase ausG modifies austinolide to austinol. Austinol can be further modified to dehydroaustinol which forms a diffusible complex with diorcinol that initiates conidiation. Due to genetic rearrangements of the clusters and the subsequent loss of some enzymes, the end products of the Emericella nidulans austinoid biosynthesis clusters are austinol and dehydroaustinol, even if additional enzymes, such as the O-acetyltransferase ausQ and the cytochrome P450 monooxygenase ausR are still functional. This is Multifunctional dioxygenase ausE from Emericella nidulans (strain FGSC A4 / ATCC 38163 / CBS 112.46 / NRRL 194 / M139) (Aspergillus nidulans).